Consider the following 206-residue polypeptide: Uridine kinase (206 aa).

9–16 is an ATP binding site; it reads GGSGSGKT.

This sequence belongs to the uridine kinase family. As to quaternary structure, monomer.

The protein resides in the cytoplasm. It carries out the reaction uridine + ATP = UMP + ADP + H(+). The catalysed reaction is cytidine + ATP = CMP + ADP + H(+). It functions in the pathway pyrimidine metabolism; CTP biosynthesis via salvage pathway; CTP from cytidine: step 1/3. The protein operates within pyrimidine metabolism; UMP biosynthesis via salvage pathway; UMP from uridine: step 1/1. The sequence is that of Uridine kinase (udk) from Borreliella burgdorferi (strain ATCC 35210 / DSM 4680 / CIP 102532 / B31) (Borrelia burgdorferi).